Consider the following 248-residue polypeptide: MWLCPLALTLILMAASGAACEVKDVCVGSPGIPGTPGSHGLPGRDGRDGVKGDPGPPGPMGPPGETPCPPGNNGLPGAPGVPGERGEKGEAGERGPPGLPAHLDEELQATLHDFRHQILQTRGALSLQGSIMTVGEKVFSSNGQSITFDAIQEACARAGGRIAVPRNPEENEAIASFVKKYNTYAYVGLTEGPSPGDFRYSDGTPVNYTNWYRGEPAGRGKEQCVEMYTDGQWNDRNCLYSRLTICEF.

A signal peptide spans methionine 1–cysteine 20. The Collagen-like domain occupies glycine 28–proline 100. 4-hydroxyproline is present on residues proline 30, proline 33, proline 36, proline 42, proline 54, proline 57, proline 63, proline 67, and proline 70. The tract at residues proline 33 to alanine 101 is disordered. Over residues proline 42–lysine 51 the composition is skewed to basic and acidic residues. Pro residues predominate over residues proline 54 to proline 70. A compositionally biased stretch (low complexity) spans glycine 71–proline 82. Positions glutamate 84–glutamate 93 are enriched in basic and acidic residues. In terms of domain architecture, C-type lectin spans methionine 132–phenylalanine 248. Disulfide bonds link cysteine 155/cysteine 246 and cysteine 224/cysteine 238. An N-linked (GlcNAc...) asparagine glycan is attached at asparagine 207.

Belongs to the SFTPA family. As to quaternary structure, oligomeric complex of 6 set of homotrimers. In terms of processing, N-acetylated.

The protein localises to the secreted. It localises to the extracellular space. Its subcellular location is the extracellular matrix. The protein resides in the surface film. In terms of biological role, in presence of calcium ions, it binds to surfactant phospholipids and contributes to lower the surface tension at the air-liquid interface in the alveoli of the mammalian lung and is essential for normal respiration. The polypeptide is Pulmonary surfactant-associated protein A2 (SFTPA2) (Homo sapiens (Human)).